The primary structure comprises 145 residues: Large ribosomal subunit protein uL11 (145 aa).

The protein belongs to the universal ribosomal protein uL11 family. In terms of assembly, part of the ribosomal stalk of the 50S ribosomal subunit. Interacts with L10 and the large rRNA to form the base of the stalk. L10 forms an elongated spine to which L12 dimers bind in a sequential fashion forming a multimeric L10(L12)X complex. In terms of processing, one or more lysine residues are methylated.

Functionally, forms part of the ribosomal stalk which helps the ribosome interact with GTP-bound translation factors. This is Large ribosomal subunit protein uL11 from Rickettsia canadensis (strain McKiel).